The sequence spans 248 residues: Endonuclease V (248 aa).

Residues Asp-54 and Asp-118 each coordinate Mg(2+).

This sequence belongs to the endonuclease V family. Requires Mg(2+) as cofactor.

The protein localises to the cytoplasm. The enzyme catalyses Endonucleolytic cleavage at apurinic or apyrimidinic sites to products with a 5'-phosphate.. DNA repair enzyme involved in the repair of deaminated bases. Selectively cleaves double-stranded DNA at the second phosphodiester bond 3' to a deoxyinosine leaving behind the intact lesion on the nicked DNA. This chain is Endonuclease V, found in Natronomonas pharaonis (strain ATCC 35678 / DSM 2160 / CIP 103997 / JCM 8858 / NBRC 14720 / NCIMB 2260 / Gabara) (Halobacterium pharaonis).